A 125-amino-acid polypeptide reads, in one-letter code: Large ribosomal subunit protein eL31 (125 aa).

It belongs to the eukaryotic ribosomal protein eL31 family. Component of the large ribosomal subunit.

The protein localises to the cytoplasm. Its function is as follows. Component of the large ribosomal subunit. The ribosome is a large ribonucleoprotein complex responsible for the synthesis of proteins in the cell. The protein is Large ribosomal subunit protein eL31 (rpl31) of Ictalurus punctatus (Channel catfish).